The chain runs to 462 residues: Argininosuccinate lyase (462 aa).

Belongs to the lyase 1 family. Argininosuccinate lyase subfamily.

The protein localises to the cytoplasm. The catalysed reaction is 2-(N(omega)-L-arginino)succinate = fumarate + L-arginine. The protein operates within amino-acid biosynthesis; L-arginine biosynthesis; L-arginine from L-ornithine and carbamoyl phosphate: step 3/3. The polypeptide is Argininosuccinate lyase (Nitratiruptor sp. (strain SB155-2)).